Here is a 442-residue protein sequence, read N- to C-terminus: Ribulose bisphosphate carboxylase/oxygenase activase 1, chloroplastic (442 aa).

The transit peptide at 1–58 (MATSVSTIGAVNKTPLSLNNSVAGTSVPSTAFFGKTLKKVYGKGVSSPKVTNKSLRIV) directs the protein to the chloroplast. 169–176 (GGKGQGKS) is an ATP binding site.

It belongs to the RuBisCO activase family.

It is found in the plastid. It localises to the chloroplast stroma. Activation of RuBisCO (ribulose-1,5-bisphosphate carboxylase/oxygenase; EC 4.1.1.39) involves the ATP-dependent carboxylation of the epsilon-amino group of lysine leading to a carbamate structure. The chain is Ribulose bisphosphate carboxylase/oxygenase activase 1, chloroplastic from Nicotiana tabacum (Common tobacco).